The primary structure comprises 755 residues: Putative two-component response regulator-like APRR6 (755 aa).

The Response regulatory domain occupies 14-128 (SILLIDHDTA…DIKNMWQHVF (115 aa)).

Belongs to the ARR-like family.

Its subcellular location is the nucleus. This Arabidopsis thaliana (Mouse-ear cress) protein is Putative two-component response regulator-like APRR6 (APRR6).